We begin with the raw amino-acid sequence, 272 residues long: Potassium channel regulatory protein (272 aa).

Positions 5–106 (ELVTLNVGGK…LLNPYLLQPR (102 aa)) constitute a BTB domain.

As to quaternary structure, can form homooligomers. Interacts with KCNA1 (via cytoplasmic N-terminal domain) and KCNA4. As to expression, ubiquitous in normal tissues and expressed in some tumor tissues.

The protein resides in the endoplasmic reticulum. Functionally, inhibits potassium fluxes in cells. May regulate Kv1 family channel proteins by retaining a fraction of channels in endomembranes. This Homo sapiens (Human) protein is Potassium channel regulatory protein (KCNRG).